The primary structure comprises 117 residues: Immunoglobulin kappa variable 1D-16 (117 aa).

The signal sequence occupies residues 1–22 (MDMRVLAQLLGLLLLCFPGARC). A framework-1 region spans residues 23-45 (DIQMTQSPSSLSASVGDRVTITC). Residues 24–117 (IQMTQSPSSL…YYCQQYNSYP (94 aa)) enclose the Ig-like domain. Cys-45 and Cys-110 form a disulfide bridge. The tract at residues 46 to 56 (RASQGISSWLA) is complementarity-determining-1. Residues 57–71 (WYQQKPEKAPKSLIY) are framework-2. Positions 72–78 (AASSLQS) are complementarity-determining-2. Positions 79–110 (GVPSRFSGSGSGTDFTLTISSLQPEDFATYYC) are framework-3. Residues 111–117 (QQYNSYP) form a complementarity-determining-3 region.

In terms of assembly, immunoglobulins are composed of two identical heavy chains and two identical light chains; disulfide-linked.

It localises to the secreted. The protein localises to the cell membrane. V region of the variable domain of immunoglobulin light chains that participates in the antigen recognition. Immunoglobulins, also known as antibodies, are membrane-bound or secreted glycoproteins produced by B lymphocytes. In the recognition phase of humoral immunity, the membrane-bound immunoglobulins serve as receptors which, upon binding of a specific antigen, trigger the clonal expansion and differentiation of B lymphocytes into immunoglobulins-secreting plasma cells. Secreted immunoglobulins mediate the effector phase of humoral immunity, which results in the elimination of bound antigens. The antigen binding site is formed by the variable domain of one heavy chain, together with that of its associated light chain. Thus, each immunoglobulin has two antigen binding sites with remarkable affinity for a particular antigen. The variable domains are assembled by a process called V-(D)-J rearrangement and can then be subjected to somatic hypermutations which, after exposure to antigen and selection, allow affinity maturation for a particular antigen. This chain is Immunoglobulin kappa variable 1D-16, found in Homo sapiens (Human).